A 98-amino-acid chain; its full sequence is NADH-ubiquinone oxidoreductase chain 4L (98 aa).

Helical transmembrane passes span 1–21 (MTPL…GVLI), 28–48 (STLL…SLLI), and 59–79 (APLI…ALLV).

This sequence belongs to the complex I subunit 4L family. Core subunit of respiratory chain NADH dehydrogenase (Complex I) which is composed of 45 different subunits.

The protein localises to the mitochondrion inner membrane. The catalysed reaction is a ubiquinone + NADH + 5 H(+)(in) = a ubiquinol + NAD(+) + 4 H(+)(out). Core subunit of the mitochondrial membrane respiratory chain NADH dehydrogenase (Complex I) which catalyzes electron transfer from NADH through the respiratory chain, using ubiquinone as an electron acceptor. Part of the enzyme membrane arm which is embedded in the lipid bilayer and involved in proton translocation. This Tarsipes rostratus (Honey possum) protein is NADH-ubiquinone oxidoreductase chain 4L (MT-ND4L).